Reading from the N-terminus, the 190-residue chain is Threonylcarbamoyl-AMP synthase (190 aa).

Residues S7 to G190 form the YrdC-like domain.

Belongs to the SUA5 family. TsaC subfamily.

The protein localises to the cytoplasm. The enzyme catalyses L-threonine + hydrogencarbonate + ATP = L-threonylcarbamoyladenylate + diphosphate + H2O. Functionally, required for the formation of a threonylcarbamoyl group on adenosine at position 37 (t(6)A37) in tRNAs that read codons beginning with adenine. Catalyzes the conversion of L-threonine, HCO(3)(-)/CO(2) and ATP to give threonylcarbamoyl-AMP (TC-AMP) as the acyladenylate intermediate, with the release of diphosphate. This chain is Threonylcarbamoyl-AMP synthase, found in Sodalis glossinidius (strain morsitans).